Consider the following 455-residue polypeptide: uncharacterized protein (455 aa).

Positions 1–24 (MKTTKILLHTGVLALSLLATQVMA) are cleaved as a signal peptide.

This is an uncharacterized protein from Pseudomonas aeruginosa (strain ATCC 15692 / DSM 22644 / CIP 104116 / JCM 14847 / LMG 12228 / 1C / PRS 101 / PAO1).